A 361-amino-acid polypeptide reads, in one-letter code: Phospho-N-acetylmuramoyl-pentapeptide-transferase (361 aa).

A run of 10 helical transmembrane segments spans residues Ser-26–Gln-46, Thr-73–Leu-93, Val-98–Ile-118, Ile-139–Thr-159, Ile-168–Phe-188, Gly-200–Ser-220, Ala-237–Phe-257, Val-264–Ile-284, Leu-289–Val-309, and Val-339–Lys-359.

It belongs to the glycosyltransferase 4 family. MraY subfamily. Mg(2+) serves as cofactor.

The protein resides in the cell inner membrane. The catalysed reaction is UDP-N-acetyl-alpha-D-muramoyl-L-alanyl-gamma-D-glutamyl-meso-2,6-diaminopimeloyl-D-alanyl-D-alanine + di-trans,octa-cis-undecaprenyl phosphate = di-trans,octa-cis-undecaprenyl diphospho-N-acetyl-alpha-D-muramoyl-L-alanyl-D-glutamyl-meso-2,6-diaminopimeloyl-D-alanyl-D-alanine + UMP. The protein operates within cell wall biogenesis; peptidoglycan biosynthesis. Catalyzes the initial step of the lipid cycle reactions in the biosynthesis of the cell wall peptidoglycan: transfers peptidoglycan precursor phospho-MurNAc-pentapeptide from UDP-MurNAc-pentapeptide onto the lipid carrier undecaprenyl phosphate, yielding undecaprenyl-pyrophosphoryl-MurNAc-pentapeptide, known as lipid I. The sequence is that of Phospho-N-acetylmuramoyl-pentapeptide-transferase from Xylella fastidiosa (strain 9a5c).